Reading from the N-terminus, the 346-residue chain is Sensor histidine kinase GraS (346 aa).

A run of 2 helical transmembrane segments spans residues 15 to 35 and 43 to 63; these read INWI…AYID and VFYI…FTFV. Positions 126–332 constitute a Histidine kinase domain; it reads EFVHDIKTPV…TFYFIFPQQN (207 aa). H129 is modified (phosphohistidine; by autocatalysis).

In terms of processing, autophosphorylated.

It localises to the cell membrane. It catalyses the reaction ATP + protein L-histidine = ADP + protein N-phospho-L-histidine.. Its function is as follows. Member of the two-component regulatory system GraR/GraS involved in resistance against cationic antimicrobial peptides (CAMPs). GraS probably functions as a sensor protein kinase which is autophosphorylated at a histidine residue and transfers its phosphate group to GraR. In Staphylococcus epidermidis (strain ATCC 35984 / DSM 28319 / BCRC 17069 / CCUG 31568 / BM 3577 / RP62A), this protein is Sensor histidine kinase GraS (graS).